Here is a 577-residue protein sequence, read N- to C-terminus: Sensory neuron membrane protein 2 (577 aa).

Over 1-6 (MVQCTL) the chain is Cytoplasmic. The helical transmembrane segment at 7–27 (IWAGIGAMMAVSGALLGWVVF) threads the bilayer. Topologically, residues 28 to 519 (PRAVHEKVIE…LMKVLSLLDV (492 aa)) are extracellular. N-linked (GlcNAc...) asparagine glycans are attached at residues Asn-66, Asn-161, Asn-271, and Asn-307. 3 cysteine pairs are disulfide-bonded: Cys-316–Cys-384, Cys-345–Cys-411, and Cys-386–Cys-400. Residues 520 to 540 (VQWVLIGVGLLLAVLMPTVYF) traverse the membrane as a helical segment. Residues 541 to 577 (VKRCRGEGSRTVSPAVTATTSAASLSTVAGVTGDRSK) are Cytoplasmic-facing.

It belongs to the CD36 family.

It is found in the cell membrane. In terms of biological role, plays an olfactory role that is not restricted to pheromone sensitivity. This chain is Sensory neuron membrane protein 2, found in Anopheles gambiae (African malaria mosquito).